The sequence spans 2240 residues: Nonribisomal peptide synthetase notE (2240 aa).

A disordered region spans residues 22–52; sequence TETMRETLSSSSSPLSLSSITSPLSSASEPP. Residues 28–52 show a composition bias toward low complexity; it reads TLSSSSSPLSLSSITSPLSSASEPP. Residues 85–484 are adenylation 1; the sequence is QQRCREAPES…GRKEGQVKIR (400 aa). Residues 616-692 form the Carrier 1 domain; the sequence is PPTTATEHAL…EQARKATPVS (77 aa). S653 is subject to O-(pantetheine 4'-phosphoryl)serine. Positions 732–1144 are condensation 1; the sequence is EDIFPCTPLQ…DFASPQDRDL (413 aa). The interval 1167 to 1564 is adenylation 2; it reads QEARQPSREA…GRRDTQLKLR (398 aa). In terms of domain architecture, Carrier 2 spans 1700–1776; that stretch reads PVSRGPELRL…ELARCTGEEP (77 aa). S1737 carries the post-translational modification O-(pantetheine 4'-phosphoryl)serine. The tract at residues 1845–2159 is condensation 2; it reads FSFHGEVSVE…ILQHQNIDMD (315 aa). The interval 2008 to 2027 is disordered; the sequence is CTMPVKATPPTDSDDSRPSA.

It belongs to the NRP synthetase family.

It catalyses the reaction L-proline + L-tryptophan + 2 ATP = brevianamide F + 2 AMP + 2 diphosphate + 2 H(+). The protein operates within alkaloid biosynthesis. Functionally, nonribisomal peptide synthetase; part of the gene cluster that mediates the biosynthesis of notoamide, a fungal indole alkaloid that belongs to a family of natural products containing a characteristic bicyclo[2.2.2]diazaoctane core. The first step of notoamide biosynthesis involves coupling of L-proline and L-tryptophan by the bimodular NRPS notE, to produce cyclo-L-tryptophan-L-proline called brevianamide F. The reverse prenyltransferase notF then acts as a deoxybrevianamide E synthase and converts brevianamide F to deoxybrevianamide E via reverse prenylation at C-2 of the indole ring leading to the bicyclo[2.2.2]diazaoctane core. Deoxybrevianamide E is further hydroxylated at C-6 of the indole ring, likely catalyzed by the cytochrome P450 monooxygenase notG, to yield 6-hydroxy-deoxybrevianamide E. 6-hydroxy-deoxybrevianamide E is a specific substrate of the prenyltransferase notC for normal prenylation at C-7 to produce 6-hydroxy-7-prenyl-deoxybrevianamide, also called notoamide S. As the proposed pivotal branching point in notoamide biosynthesis, notoamide S can be diverted to notoamide E through an oxidative pyran ring closure putatively catalyzed by either notH cytochrome P450 monooxygenase or the notD FAD-linked oxidoreductase. This step would be followed by an indole 2,3-epoxidation-initiated pinacol-like rearrangement catalyzed by the notB FAD-dependent monooxygenase leading to the formation of notoamide C and notoamide D. On the other hand notoamide S is converted to notoamide T by notH (or notD), a bifunctional oxidase that also functions as the intramolecular Diels-Alderase responsible for generation of (+)-notoamide T. To generate antipodal (-)-notoaminide T, notH' (or notD') in Aspergillus versicolor is expected to catalyze a Diels-Alder reaction leading to the opposite stereochemistry. The remaining oxidoreductase notD (or notH) likely catalyzes the oxidative pyran ring formation to yield (+)-stephacidin A. The FAD-dependent monooxygenase notI is highly similar to notB and is predicted to catalyze a similar conversion from (+)-stephacidin A to (-)-notoamide B via the 2,3-epoxidation of (+)-stephacidin A followed by a pinacol-type rearrangement. Finally, it remains unclear which enzyme could be responsible for the final hydroxylation steps leading to notoamide A and sclerotiamide. The polypeptide is Nonribisomal peptide synthetase notE (Aspergillus sp. (strain MF297-2)).